The following is a 98-amino-acid chain: uncharacterized protein (98 aa).

The tract at residues 53-98 (AALEGGRHRHRGESASGNGIQHGVPPNVALIPSGSTLLTPARSGHV) is disordered.

This is an uncharacterized protein from Mycolicibacterium smegmatis (strain ATCC 700084 / mc(2)155) (Mycobacterium smegmatis).